The following is a 214-amino-acid chain: Intermembrane phospholipid transport system binding protein MlaC (214 aa).

The N-terminal stretch at 1–28 (MNLIQLKKWFTILTFVLTAFLVTRTAIA) is a signal peptide.

This sequence belongs to the MlaC/ttg2D family.

The protein localises to the periplasm. Functionally, involved in a phospholipid transport pathway that maintains lipid asymmetry in the outer membrane by retrograde trafficking of phospholipids from the outer membrane to the inner membrane. May transfer phospholipid across the periplasmic space and deliver it to the MlaFEDB complex at the inner membrane. The polypeptide is Intermembrane phospholipid transport system binding protein MlaC (Haemophilus influenzae (strain ATCC 51907 / DSM 11121 / KW20 / Rd)).